We begin with the raw amino-acid sequence, 62 residues long: MGKGTPSMGKHGRSKTHIVCRRCGRRSYNVAKGYCAACGFGRSRRMRRYSWQNKKWNRVRVV.

Residues Cys-20, Cys-23, Cys-35, and Cys-38 each coordinate Zn(2+). The C4-type zinc-finger motif lies at 20-38; that stretch reads CRRCGRRSYNVAKGYCAAC.

It belongs to the eukaryotic ribosomal protein eL37 family. Zn(2+) is required as a cofactor.

Binds to the 23S rRNA. This is Large ribosomal subunit protein eL37 (rpl37e) from Aeropyrum pernix (strain ATCC 700893 / DSM 11879 / JCM 9820 / NBRC 100138 / K1).